Reading from the N-terminus, the 430-residue chain is Enolase (430 aa).

(2R)-2-phosphoglycerate is bound at residue glutamine 163. The active-site Proton donor is the glutamate 205. Mg(2+)-binding residues include aspartate 242, glutamate 285, and aspartate 312. Residues lysine 337, arginine 366, serine 367, and lysine 388 each coordinate (2R)-2-phosphoglycerate. Catalysis depends on lysine 337, which acts as the Proton acceptor.

Belongs to the enolase family. Mg(2+) serves as cofactor.

It is found in the cytoplasm. The protein resides in the secreted. The protein localises to the cell surface. The catalysed reaction is (2R)-2-phosphoglycerate = phosphoenolpyruvate + H2O. It participates in carbohydrate degradation; glycolysis; pyruvate from D-glyceraldehyde 3-phosphate: step 4/5. Catalyzes the reversible conversion of 2-phosphoglycerate (2-PG) into phosphoenolpyruvate (PEP). It is essential for the degradation of carbohydrates via glycolysis. The polypeptide is Enolase (Rhodopseudomonas palustris (strain BisB18)).